We begin with the raw amino-acid sequence, 309 residues long: ADP-L-glycero-D-manno-heptose-6-epimerase (309 aa).

NADP(+)-binding positions include L10–I11, D31–N32, K38, K53, Q75–S79, and N92. The Proton acceptor role is filled by Y139. Residue K143 participates in NADP(+) binding. Residue N168 coordinates substrate. V169 and K177 together coordinate NADP(+). The Proton acceptor role is filled by K177. Substrate is bound by residues S179, H186, F200 to S203, R208, and Y271.

The protein belongs to the NAD(P)-dependent epimerase/dehydratase family. HldD subfamily. As to quaternary structure, homopentamer. The cofactor is NADP(+).

It catalyses the reaction ADP-D-glycero-beta-D-manno-heptose = ADP-L-glycero-beta-D-manno-heptose. Its pathway is nucleotide-sugar biosynthesis; ADP-L-glycero-beta-D-manno-heptose biosynthesis; ADP-L-glycero-beta-D-manno-heptose from D-glycero-beta-D-manno-heptose 7-phosphate: step 4/4. Functionally, catalyzes the interconversion between ADP-D-glycero-beta-D-manno-heptose and ADP-L-glycero-beta-D-manno-heptose via an epimerization at carbon 6 of the heptose. In Histophilus somni (strain 2336) (Haemophilus somnus), this protein is ADP-L-glycero-D-manno-heptose-6-epimerase.